The following is a 446-amino-acid chain: Homocitrate synthase, mitochondrial (446 aa).

Over residues M1–P14 the composition is skewed to low complexity. The segment at M1–A36 is disordered. Positions F48 to V307 constitute a Pyruvate carboxyltransferase domain. Position 56 (R56) interacts with 2-oxoglutarate. E57 provides a ligand contact to Mg(2+). Residues H116, R176, and T210 each coordinate 2-oxoglutarate. Mg(2+) contacts are provided by H237 and H239. H334 functions as the Proton acceptor in the catalytic mechanism. Residues T422–E446 are disordered. A compositionally biased stretch (basic and acidic residues) spans P437–E446.

Belongs to the alpha-IPM synthase/homocitrate synthase family. Homocitrate synthase LYS20/LYS21 subfamily. Mg(2+) is required as a cofactor. It depends on Mn(2+) as a cofactor.

It is found in the mitochondrion. The catalysed reaction is acetyl-CoA + 2-oxoglutarate + H2O = (2R)-homocitrate + CoA + H(+). The protein operates within amino-acid biosynthesis; L-lysine biosynthesis via AAA pathway; L-alpha-aminoadipate from 2-oxoglutarate: step 1/5. In terms of biological role, catalyzes the aldol-type condensation of 2-oxoglutarate with acetyl-CoA to yield homocitrate. Carries out the first step of the alpha-aminoadipate (AAA) lysine biosynthesis pathway. This is Homocitrate synthase, mitochondrial (LYS1) from Yarrowia lipolytica (strain CLIB 122 / E 150) (Yeast).